A 1399-amino-acid chain; its full sequence is MSDIMDRVDNSTRKFKLGDNIHFEISSSANTQGNSHQIPRKQSQSTNSNHQEQSQQARNQSSQSNTNTTSRKKRKKHKKKSKISTVQAHLNNPEDDYPTSRVIKQAPNGDVIVESLEDEDENHHHHEYEEHEDSCEYHPSSKSNTRKNSSVNESTHNKIWDSASIEEQQRLKEFWESLDESKKLDLVKIDKDSIMRMFKNETRHHLQQQLSSSVSSQPQQQQSQQNVSTSSNNGSSSGINNNSNNNNGNNTNSCACKYCGRRNSIIEEELESIYDNHFDDIIDFIHEVRDINDLNALPGLLFGGFHMLEEERRLQKRQQKYKEKWNHSHHSTSVSPQPESQDNKQLKKSQDQNEMKAISIEDEMDKFKSHLAKMSISNSQSNPNQLSEIHLQLKSEDGNLTGTTESQLFNKLLDPKLFEALENMDLDKMKEMSKMDPKNLNNVNILEKATSLREIVRDLNNADRSSLQKGISHVSNMGKFFSNLATLNNAQNLPEIVASGGLDDQLSKGLSSFAEDLLKNDGNSFIGMMEALSESRTAREELLKETVISQNPQEQKSVSIGQSDQSGDVWVDDDDENNRVDVEIHACDNPHHHHHHHQHSNKQHDHHHCHNHRHRHRRRFEELDDEHDQENEDEELEDDEEDYYDEYDDDEEEDEEEDEDDDDIEEEGASDTESEISEEEKMQEIRRLFLIQVIKLFQERLKNAYKEKLSQDRTQKLIEELEAEENAKKERELKKLKQKEKAKEKKRLQQLAKEEERKRKEEELKAKEEEQRLQKEKLKAEQKKRKEEARLKKEEEKKKKIEEQKRKEEEHRKKVEAQQKREAEAKKLKEERRRKAEEERKQKEEEKKQKELLKKQKEEEKRQKELLRKQREEEKEKEAARLEEERTKLMVNDDDELARQIEVEKSKLSAAVANNPLLNHLYQPSPGSAPTTPSTANLPALSPLQSASAKLMSQQFEQQHLQQVSQEKLPQTSNIQSPNQQPHPSISSFQFSSEYNSNASVFHNNSSLLSNPSIMNSPRTTSTNLLNGNSPIVPNVTTNISLGATNTSNLSPWSSKSRLNSLSNSTQPFIGGNQFTQTNTASFNGVGNAVQQSGNFSPFNAFSDPLVSDAFKAAGPAGMNSNIWLNSSNVGNNSGNQSGISAPTTTSTNTSSRNNSIWGNTNPNKVTEPSLLNNNNNNNNGLISVESSGLWNSNGGNNQPARSSSVTGISSNLSTINPISSMDIELIQSTTFNCFQILQNSGQLEFGVAPLMKLFQNVKTILNKPSLTINQFLNCCTINSNVYIFSLKYDDFGNVTHVEVAYKNVPRTSPPPPPGNIVQNQHQVSSPSFAAATASSSSLATSNVPLGFINSGGSPTGLFNDININHGGTSFLPPIGESSTNDAGSSNVGNSGFGRRLWN.

Residues 28-52 (SANTQGNSHQIPRKQSQSTNSNHQE) show a composition bias toward polar residues. Disordered regions lie at residues 28-105 (SANT…VIKQ), 119-155 (EDENHHHHEYEEHEDSCEYHPSSKSNTRKNSSVNEST), 202-249 (TRHH…NNGN), 318-353 (QQKYKEKWNHSHHSTSVSPQPESQDNKQLKKSQDQN), 546-574 (TVISQNPQEQKSVSIGQSDQSGDVWVDDD), 589-681 (NPHH…EEEK), 722-894 (EAEE…VNDD), 949-990 (AKLM…SSFQ), 1134-1178 (SGNQ…NNNN), and 1373-1399 (PPIGESSTNDAGSSNVGNSGFGRRLWN). The span at 53 to 69 (QSQQARNQSSQSNTNTT) shows a compositional bias: low complexity. Positions 70–82 (SRKKRKKHKKKSK) are enriched in basic residues. Residues 140–154 (SSKSNTRKNSSVNES) show a composition bias toward polar residues. Positions 207–249 (QQQLSSSVSSQPQQQQSQQNVSTSSNNGSSSGINNNSNNNNGN) are enriched in low complexity. A compositionally biased stretch (polar residues) spans 331–340 (STSVSPQPES). A compositionally biased stretch (basic and acidic residues) spans 341 to 353 (QDNKQLKKSQDQN). Positions 547 to 566 (VISQNPQEQKSVSIGQSDQS) are enriched in polar residues. Residues 591 to 618 (HHHHHHHQHSNKQHDHHHCHNHRHRHRR) show a composition bias toward basic residues. The segment covering 622–678 (ELDDEHDQENEDEELEDDEEDYYDEYDDDEEEDEEEDEDDDDIEEEGASDTESEISE) has biased composition (acidic residues). Positions 708-896 (KLSQDRTQKL…TKLMVNDDDE (189 aa)) form a coiled coil. 2 stretches are compositionally biased toward basic and acidic residues: residues 722-743 (EAEENAKKERELKKLKQKEKAK) and 752-888 (AKEE…ERTK). The segment covering 1134 to 1156 (SGNQSGISAPTTTSTNTSSRNNS) has biased composition (low complexity). Composition is skewed to polar residues over residues 1157–1172 (IWGNTNPNKVTEPSLL) and 1377–1390 (ESSTNDAGSSNVGN).

It belongs to the NST1 family.

It is found in the cytoplasm. Functionally, may act as a negative regulator of salt tolerance. This is Stress response protein NST1 (NST1) from Candida albicans (strain SC5314 / ATCC MYA-2876) (Yeast).